A 120-amino-acid polypeptide reads, in one-letter code: Spermidine export protein MdtJ (120 aa).

The next 4 helical transmembrane spans lie at 1-21 (MFYW…TLSM), 31-51 (TGFI…SFAV), 54-74 (IALG…ITLF), and 81-101 (EALS…IALI).

It belongs to the drug/metabolite transporter (DMT) superfamily. Small multidrug resistance (SMR) (TC 2.A.7.1) family. MdtJ subfamily. As to quaternary structure, forms a complex with MdtI.

Its subcellular location is the cell inner membrane. Its function is as follows. Catalyzes the excretion of spermidine. The chain is Spermidine export protein MdtJ from Citrobacter koseri (strain ATCC BAA-895 / CDC 4225-83 / SGSC4696).